The chain runs to 43 residues: Thymosin beta-12 (43 aa).

2 stretches are compositionally biased toward basic and acidic residues: residues 1–25 (MSDK…ETQE) and 33–43 (ETIEQEKQATA). The disordered stretch occupies residues 1–43 (MSDKPDLAEVSNFDKTKLKKTETQEKNPLPTKETIEQEKQATA). S2 carries the post-translational modification N-acetylserine.

This sequence belongs to the thymosin beta family.

It localises to the cytoplasm. The protein resides in the cytoskeleton. Plays an important role in the organization of the cytoskeleton. Binds to and sequesters actin monomers (G actin) and therefore inhibits actin polymerization. The polypeptide is Thymosin beta-12 (Oncorhynchus mykiss (Rainbow trout)).